We begin with the raw amino-acid sequence, 349 residues long: Heme A synthase (349 aa).

The next 5 helical transmembrane spans lie at 15 to 35 (AVQV…VVGG), 101 to 121 (LLGR…ALTG), 132 to 152 (FGLF…VASG), 162 to 182 (YRLA…VAVA), and 203 to 223 (VLVG…GLDA). H265 provides a ligand contact to heme. The next 3 helical transmembrane spans lie at 268–288 (IAYL…RLGG), 296–316 (LVFA…VHMV), and 317–337 (PLDL…AAMI). H324 contributes to the heme binding site.

It belongs to the COX15/CtaA family. Type 2 subfamily. In terms of assembly, interacts with CtaB. The cofactor is heme b.

It is found in the cell membrane. The enzyme catalyses Fe(II)-heme o + 2 A + H2O = Fe(II)-heme a + 2 AH2. It participates in porphyrin-containing compound metabolism; heme A biosynthesis; heme A from heme O: step 1/1. Its function is as follows. Catalyzes the conversion of heme O to heme A by two successive hydroxylations of the methyl group at C8. The first hydroxylation forms heme I, the second hydroxylation results in an unstable dihydroxymethyl group, which spontaneously dehydrates, resulting in the formyl group of heme A. The chain is Heme A synthase from Azorhizobium caulinodans (strain ATCC 43989 / DSM 5975 / JCM 20966 / LMG 6465 / NBRC 14845 / NCIMB 13405 / ORS 571).